We begin with the raw amino-acid sequence, 299 residues long: Plant-type L-asparaginase (299 aa).

Residue Thr-169 is the Nucleophile of the active site. Substrate is bound by residues 197–200 and 220–223; these read RVGD and TGVG.

This sequence belongs to the Ntn-hydrolase family. Heterotetramer of two alpha and two beta chains arranged as a dimer of alpha/beta heterodimers. The uncleaved protein forms homodimers. In terms of processing, autocleaved. Generates the alpha and beta subunits. The N-terminal residue of the beta subunit is thought to be responsible for the nucleophile hydrolase activity.

The catalysed reaction is L-asparagine + H2O = L-aspartate + NH4(+). With respect to regulation, divalent metal ions and EDTA do not have significant effect on enzyme activity, indicating that activity is metal-independent. Its function is as follows. Catalyzes the hydrolysis of L-asparagine into L-aspartate and ammonia. Also displays D-asparaginase activity, which is about 20% of the L-asparaginase activity. Does not exhibit glutaminase activity. This chain is Plant-type L-asparaginase, found in Pyrobaculum calidifontis (strain DSM 21063 / JCM 11548 / VA1).